The following is a 490-amino-acid chain: MSDLDGFCQNAFSDLNSLNQQVFKANYAVRGALAILADEIQDDLLENPSSYPFSEIVYANIGNPQQMGQSPITFVRQVLSLCQYPTLLDHAEEKWFQNLFPTDVVQRSKMLLKESGSLGAYSASQGIPLVRRHVADFIRARDGFDCEPSDIYLTSGASHAARLIMTLIIARPTDGVMVPAPQYPLYGAQIDLMSGSMVSYSLSEENNWDIDFDQFKKSFDEASKKGINVRLCVVINPGNPTGACISENSMEKVLRFAKAKGIVLLADEVYQNNIYQNKFHSFRRKLGELREKEPDNHWDQVSLISVNSVSKGQFGECGQRGGYLDVVNIPEPAKDQILKLATIDICPPVAGQLLVDMLVNPPKPGDPSYDLFIKEVDEIHEALRLQCRQLYEGTKRMKRVSCLEPHGAMYLHPSVSLPEKLITTAKAQKIQPDEFYAIELLKRSGICVVPGSGFGQPEGDYHIRITFLAKGTEYIERFVKAHNEIMDLYE.

Pyridoxal 5'-phosphate contacts are provided by alanine 157, serine 158, tyrosine 183, asparagine 239, and serine 308. Lysine 311 is subject to N6-(pyridoxal phosphate)lysine. Arginine 320 is a binding site for pyridoxal 5'-phosphate.

This sequence belongs to the class-I pyridoxal-phosphate-dependent aminotransferase family. Alanine aminotransferase subfamily. As to quaternary structure, homodimer. Pyridoxal 5'-phosphate is required as a cofactor.

It is found in the cytoplasm. The protein localises to the mitochondrion. The catalysed reaction is L-alanine + 2-oxoglutarate = pyruvate + L-glutamate. The protein operates within amino-acid degradation; L-alanine degradation via transaminase pathway; pyruvate from L-alanine: step 1/1. In terms of biological role, alanine aminotransferase involved in both alanine biosynthesis and utilization. The sequence is that of Putative alanine aminotransferase (alt1) from Schizosaccharomyces pombe (strain 972 / ATCC 24843) (Fission yeast).